The chain runs to 193 residues: Ion-translocating oxidoreductase complex subunit A (193 aa).

Transmembrane regions (helical) follow at residues 4–24 (FLLV…KFLG), 39–59 (IGMG…CWLV), 71–91 (FLRI…IETV), 102–122 (ALGI…LPLM), 134–154 (TLSG…FAGM), and 171–191 (PIAF…AGLV).

It belongs to the NqrDE/RnfAE family. The complex is composed of six subunits: RnfA, RnfB, RnfC, RnfD, RnfE and RnfG.

Its subcellular location is the cellular chromatophore membrane. In terms of biological role, part of a membrane-bound complex that couples electron transfer with translocation of ions across the membrane. Required for nitrogen fixation. Involved in electron transfer to nitrogenase. The sequence is that of Ion-translocating oxidoreductase complex subunit A from Rhodobacter capsulatus (Rhodopseudomonas capsulata).